We begin with the raw amino-acid sequence, 547 residues long: Glucose-6-phosphate isomerase (547 aa).

The active-site Proton donor is the Glu-351. Residues His-382 and Lys-511 contribute to the active site.

It belongs to the GPI family.

It localises to the cytoplasm. It carries out the reaction alpha-D-glucose 6-phosphate = beta-D-fructose 6-phosphate. Its pathway is carbohydrate biosynthesis; gluconeogenesis. It participates in carbohydrate degradation; glycolysis; D-glyceraldehyde 3-phosphate and glycerone phosphate from D-glucose: step 2/4. In terms of biological role, catalyzes the reversible isomerization of glucose-6-phosphate to fructose-6-phosphate. This is Glucose-6-phosphate isomerase from Xanthobacter autotrophicus (strain ATCC BAA-1158 / Py2).